The chain runs to 84 residues: Exodeoxyribonuclease 7 small subunit (84 aa).

Belongs to the XseB family. In terms of assembly, heterooligomer composed of large and small subunits.

The protein localises to the cytoplasm. The enzyme catalyses Exonucleolytic cleavage in either 5'- to 3'- or 3'- to 5'-direction to yield nucleoside 5'-phosphates.. In terms of biological role, bidirectionally degrades single-stranded DNA into large acid-insoluble oligonucleotides, which are then degraded further into small acid-soluble oligonucleotides. This chain is Exodeoxyribonuclease 7 small subunit, found in Bartonella quintana (strain Toulouse) (Rochalimaea quintana).